The primary structure comprises 475 residues: MKKTTAFLLCFLMIFTALLPMQNANAYDASLIPNLQIPQKNIPNNDGMNFVKGLRLGWNLGNTFDAFNGTNITNELDYETSWSGIKTTKQMIDAIKQKGFNTVRIPVSWHPHVSGSDYKISDVWMNRVQEVVNYCIDNKMYVILNTHHDVDKVKGYFPSSQYMASSKKYITSVWAQIAARFANYDEHLIFEGMNEPRLVGHANEWWPELTNSDVVDSINCINQLNQDFVNTVRATGGKNASRYLMCPGYVASPDGATNDYFRMPNDISGNNNKIIVSVHAYCPWNFAGLAMADGGTNAWNINDSKDQSEVTWFMDNIYNKYTSRGIPVIIGECGAVDKNNLKTRVEYMSYYVAQAKARGILCILWDNNNFSGTGELFGFFDRRSCQFKFPEIIDGMVKYAFEAKTDPDPVIVYGDYNNDGNVDALDFAGLKKYIMAADHAYVKNLDVNLDNEVNAFDLAILKKYLLGMVSKLPSN.

An N-terminal signal peptide occupies residues 1–26; the sequence is MKKTTAFLLCFLMIFTALLPMQNANA. Residue H147 is part of the active site. E195 serves as the catalytic Proton donor. E332 functions as the Nucleophile in the catalytic mechanism. The region spanning 409 to 474 is the Dockerin domain; the sequence is PVIVYGDYNN…LLGMVSKLPS (66 aa).

The protein belongs to the glycosyl hydrolase 5 (cellulase A) family.

It catalyses the reaction Endohydrolysis of (1-&gt;4)-beta-D-glucosidic linkages in cellulose, lichenin and cereal beta-D-glucans.. The biological conversion of cellulose to glucose generally requires three types of hydrolytic enzymes: (1) Endoglucanases which cut internal beta-1,4-glucosidic bonds; (2) Exocellobiohydrolases that cut the disaccharide cellobiose from the non-reducing end of the cellulose polymer chain; (3) Beta-1,4-glucosidases which hydrolyze the cellobiose and other short cello-oligosaccharides to glucose. This is Endoglucanase A (celCCA) from Ruminiclostridium cellulolyticum (strain ATCC 35319 / DSM 5812 / JCM 6584 / H10) (Clostridium cellulolyticum).